Here is a 48-residue protein sequence, read N- to C-terminus: ATP synthase protein 8 (48 aa).

The chain crosses the membrane as a helical span at residues 4–24 (LVPFFFVNQVVYAFVILTVLI).

It belongs to the ATPase protein 8 family. As to quaternary structure, F-type ATPases have 2 components, CF(1) - the catalytic core - and CF(0) - the membrane proton channel.

Its subcellular location is the mitochondrion membrane. In terms of biological role, mitochondrial membrane ATP synthase (F(1)F(0) ATP synthase or Complex V) produces ATP from ADP in the presence of a proton gradient across the membrane which is generated by electron transport complexes of the respiratory chain. F-type ATPases consist of two structural domains, F(1) - containing the extramembraneous catalytic core and F(0) - containing the membrane proton channel, linked together by a central stalk and a peripheral stalk. During catalysis, ATP synthesis in the catalytic domain of F(1) is coupled via a rotary mechanism of the central stalk subunits to proton translocation. Part of the complex F(0) domain. Minor subunit located with subunit a in the membrane. This is ATP synthase protein 8 (atp8) from Aspergillus amstelodami.